The chain runs to 67 residues: Surface composition regulator (67 aa).

The protein belongs to the GlgS family.

Its function is as follows. Major determinant of cell surface composition. Negatively regulates motility, adhesion and synthesis of biofilm exopolysaccharides. This Salmonella enteritidis PT4 (strain P125109) protein is Surface composition regulator.